A 164-amino-acid polypeptide reads, in one-letter code: Large ribosomal subunit protein uL10 (164 aa).

This sequence belongs to the universal ribosomal protein uL10 family. Part of the ribosomal stalk of the 50S ribosomal subunit. The N-terminus interacts with L11 and the large rRNA to form the base of the stalk. The C-terminus forms an elongated spine to which L12 dimers bind in a sequential fashion forming a multimeric L10(L12)X complex.

In terms of biological role, forms part of the ribosomal stalk, playing a central role in the interaction of the ribosome with GTP-bound translation factors. The polypeptide is Large ribosomal subunit protein uL10 (rplJ) (Helicobacter pylori (strain J99 / ATCC 700824) (Campylobacter pylori J99)).